Reading from the N-terminus, the 172-residue chain is Large ribosomal subunit protein uL10 (172 aa).

The protein belongs to the universal ribosomal protein uL10 family. Part of the ribosomal stalk of the 50S ribosomal subunit. The N-terminus interacts with L11 and the large rRNA to form the base of the stalk. The C-terminus forms an elongated spine to which L12 dimers bind in a sequential fashion forming a multimeric L10(L12)X complex.

Functionally, forms part of the ribosomal stalk, playing a central role in the interaction of the ribosome with GTP-bound translation factors. The polypeptide is Large ribosomal subunit protein uL10 (Nitrobacter hamburgensis (strain DSM 10229 / NCIMB 13809 / X14)).